The sequence spans 466 residues: Ribulose bisphosphate carboxylase large chain (466 aa).

Lysine 5 is modified (N6,N6,N6-trimethyllysine). Asparagine 114 and threonine 164 together coordinate substrate. Lysine 166 (proton acceptor) is an active-site residue. Residue lysine 168 participates in substrate binding. 3 residues coordinate Mg(2+): lysine 192, aspartate 194, and glutamate 195. Lysine 192 bears the N6-carboxylysine mark. Histidine 285 acts as the Proton acceptor in catalysis. Residues arginine 286, histidine 318, and serine 370 each coordinate substrate.

This sequence belongs to the RuBisCO large chain family. Type I subfamily. As to quaternary structure, heterohexadecamer of 8 large chains and 8 small chains; disulfide-linked. The disulfide link is formed within the large subunit homodimers. It depends on Mg(2+) as a cofactor. The disulfide bond which can form in the large chain dimeric partners within the hexadecamer appears to be associated with oxidative stress and protein turnover.

It localises to the plastid. It is found in the chloroplast. It carries out the reaction 2 (2R)-3-phosphoglycerate + 2 H(+) = D-ribulose 1,5-bisphosphate + CO2 + H2O. It catalyses the reaction D-ribulose 1,5-bisphosphate + O2 = 2-phosphoglycolate + (2R)-3-phosphoglycerate + 2 H(+). Functionally, ruBisCO catalyzes two reactions: the carboxylation of D-ribulose 1,5-bisphosphate, the primary event in carbon dioxide fixation, as well as the oxidative fragmentation of the pentose substrate in the photorespiration process. Both reactions occur simultaneously and in competition at the same active site. The chain is Ribulose bisphosphate carboxylase large chain from Hedera helix (English ivy).